A 298-amino-acid polypeptide reads, in one-letter code: MQNNNRQELQTLRDLIRYAVSRLNAARVALGHGSDNAWDEAVYLVLHGLHLPPDTLDPFLDARVLPSERSRVLDLIDRRVTERLPAAYLTGEAWLRGHRFHVDRRVIVPRSPIAELLDEGLAPWVRDPLQVERALDMCTGSGCLAILAALAFPVAQVDAVDVSSDALEVAARNVAEYGLQDRLTLRQGNLFEALPAAAYDVIVCNPPYVNQASMGALPQEYRHEPALALAGGADGMDLVRRILAAAPGYLSADGVLVLEIGHERDHFEAAFPDLQPVWLDTAESSDQILLLTREQLNT.

It belongs to the protein N5-glutamine methyltransferase family. PrmB subfamily.

The enzyme catalyses L-glutaminyl-[ribosomal protein uL3] + S-adenosyl-L-methionine = N(5)-methyl-L-glutaminyl-[ribosomal protein uL3] + S-adenosyl-L-homocysteine + H(+). In terms of biological role, methylates large ribosomal subunit protein uL3 on a specific glutamine residue. The polypeptide is Ribosomal protein uL3 glutamine methyltransferase (Bordetella pertussis (strain Tohama I / ATCC BAA-589 / NCTC 13251)).